Reading from the N-terminus, the 522-residue chain is 2-isopropylmalate synthase (522 aa).

One can recognise a Pyruvate carboxyltransferase domain in the interval 5-267 (VIIFDTTLRD…ETGINAKEIH (263 aa)). Positions 14, 202, 204, and 238 each coordinate Mn(2+). The interval 392 to 522 (QLQQLVVQSD…MQKNRELGGV (131 aa)) is regulatory domain.

This sequence belongs to the alpha-IPM synthase/homocitrate synthase family. LeuA type 1 subfamily. As to quaternary structure, homodimer. Mn(2+) is required as a cofactor.

The protein resides in the cytoplasm. It catalyses the reaction 3-methyl-2-oxobutanoate + acetyl-CoA + H2O = (2S)-2-isopropylmalate + CoA + H(+). The protein operates within amino-acid biosynthesis; L-leucine biosynthesis; L-leucine from 3-methyl-2-oxobutanoate: step 1/4. Its function is as follows. Catalyzes the condensation of the acetyl group of acetyl-CoA with 3-methyl-2-oxobutanoate (2-ketoisovalerate) to form 3-carboxy-3-hydroxy-4-methylpentanoate (2-isopropylmalate). This Shewanella baltica (strain OS185) protein is 2-isopropylmalate synthase.